A 164-amino-acid chain; its full sequence is Small ribosomal subunit protein uS5 (164 aa).

An S5 DRBM domain is found at 11 to 74 (LKEKLISVNR…EKARKNMIII (64 aa)).

Belongs to the universal ribosomal protein uS5 family. In terms of assembly, part of the 30S ribosomal subunit. Contacts proteins S4 and S8.

Its function is as follows. With S4 and S12 plays an important role in translational accuracy. In terms of biological role, located at the back of the 30S subunit body where it stabilizes the conformation of the head with respect to the body. The sequence is that of Small ribosomal subunit protein uS5 from Buchnera aphidicola subsp. Cinara cedri (strain Cc).